The following is a 269-amino-acid chain: Mitochondrial scaffolding protein 1 (269 aa).

Positions 49–121 (VVEIEKTSKG…HDEAVEVFRS (73 aa)) constitute a PDZ domain. The disordered stretch occupies residues 143-185 (RTQTPTASVSITPQVTPQTRSTQNNTDTPKSMSHSESKSRLTS). Residues 145–174 (QTPTASVSITPQVTPQTRSTQNNTDTPKSM) show a composition bias toward polar residues. A helical transmembrane segment spans residues 240–262 (WLTEALYVSIGLGALTISGYLAY).

The protein resides in the membrane. Plays a role in the regulation of lifespan in a partially daf-16-mediated manner, and may be involved in regulating the levels of reactive oxygen species production in response to heat stress. The chain is Mitochondrial scaffolding protein 1 from Caenorhabditis elegans.